A 245-amino-acid chain; its full sequence is Neurovirulence factor ICP34.5 (245 aa).

The span at M1–R15 shows a compositional bias: basic residues. The segment at M1–P17 is required for nucleolar localization. 2 disordered regions span residues M1–L122 and R143–P172. The segment covering T25–S36 has biased composition (polar residues). The span at A67–P77 shows a compositional bias: acidic residues. 2 stretches are compositionally biased toward pro residues: residues D78–E87 and S113–L122. A Nuclear export signal motif is present at residues L122 to R131. 6 consecutive repeat copies span residues A155–P157, A158–P160, A161–P163, A164–P166, A167–P169, and A170–P172. The segment at A155–P172 is 6 X 3 AA tandem repeats of A-T-P. Over residues A158–P172 the composition is skewed to low complexity. A binding to PP1CA region spans residues P172 to H185. An interaction with host PPP1CA region spans residues P172–H185. Positions V187–V245 are important for interferon resistance. Residues R197 to V215 carry the Bipartite nuclear localization signal motif. Residues V215 to A230 form an interaction with host EIF2S1/EIF-2ALPHA region.

The protein belongs to the PPP1R15 family. Interacts with host PPP1CA to form a high-molecular-weight complex that dephosphorylates EIF2S1/eIF-2alpha. Interacts with host EIF2S1/eIF-2alpha; this interaction is crucial for the specific dephosphorylation of EIF2S1/eIF-2alpha by PPP1CA. Binds to proliferating cell nuclear antigen (PCNA), which may release host cells from growth arrest and facilitate viral replication. Interacts (via N-terminus) with host C1QBP and PRKCA. Interacts with protein UL31. Interacts with host TBK1. Interacts with host STING/TMEM173; this interaction inhibits the intracellular DNA sensing pathway. Interacts with host BECN1; this interaction modulates host autophagy.

The protein localises to the host cytoplasm. Its subcellular location is the host nucleus. It is found in the host nucleolus. The protein resides in the virion. Functionally, inhibits the establishment of the immune response and of the integrated stress response (ISR) in the infected cell. Plays essential roles in viral nuclear egress to mediate capsid transit across the nuclear membrane. Facilitates nuclear egress cooperatively with host C1QBP and protein kinase C/PKC to induce lamin A/C phosphorylation and subsequent reorganization. In turn, lamina disassembles and nuclear egress occurs. Recruits the serine/threonine protein phosphatase PPP1CA/PP1-alpha to dephosphorylate the translation initiation factor EIF2S1/eIF-2alpha, thereby couteracting the host shutoff of protein synthesis involving double-stranded RNA-dependent protein kinase EIF2AK2/PKR. In turn, controls host IRF3 activation and subsequently inhibits host interferon response. Controls the DNA sensing pathway by interacting with and inhibiting host STING/TMEM173. Also down-modulates the host MHC class II proteins cell surface expression. Acts as a neurovirulence factor that has a profound effect on the growth of the virus in central nervous system tissue, by interacting with host BECN1 and thereby antagonizing the host autophagy response. This Homo sapiens (Human) protein is Neurovirulence factor ICP34.5 (RL1).